A 217-amino-acid chain; its full sequence is Orotidine 5'-phosphate decarboxylase (217 aa).

Substrate-binding positions include Asp-14, Lys-36, 64 to 73 (DFKVADIPST), Ser-120, 172 to 182 (PGVGAQGGNLS), Gly-197, and Arg-198. Lys-66 functions as the Proton donor in the catalytic mechanism.

It belongs to the OMP decarboxylase family. Type 1 subfamily. In terms of assembly, homodimer.

The catalysed reaction is orotidine 5'-phosphate + H(+) = UMP + CO2. Its pathway is pyrimidine metabolism; UMP biosynthesis via de novo pathway; UMP from orotate: step 2/2. Catalyzes the decarboxylation of orotidine 5'-monophosphate (OMP) to uridine 5'-monophosphate (UMP). This Methanococcus maripaludis (strain C6 / ATCC BAA-1332) protein is Orotidine 5'-phosphate decarboxylase.